Consider the following 430-residue polypeptide: Enolase (430 aa).

Gln163 is a (2R)-2-phosphoglycerate binding site. Glu205 serves as the catalytic Proton donor. Mg(2+) contacts are provided by Asp242, Glu285, and Asp312. (2R)-2-phosphoglycerate contacts are provided by Lys337, Arg366, Ser367, and Lys388. Lys337 functions as the Proton acceptor in the catalytic mechanism.

The protein belongs to the enolase family. It depends on Mg(2+) as a cofactor.

The protein resides in the cytoplasm. Its subcellular location is the secreted. It is found in the cell surface. It catalyses the reaction (2R)-2-phosphoglycerate = phosphoenolpyruvate + H2O. It functions in the pathway carbohydrate degradation; glycolysis; pyruvate from D-glyceraldehyde 3-phosphate: step 4/5. Its function is as follows. Catalyzes the reversible conversion of 2-phosphoglycerate (2-PG) into phosphoenolpyruvate (PEP). It is essential for the degradation of carbohydrates via glycolysis. In Rhodopseudomonas palustris (strain BisB18), this protein is Enolase.